The following is a 168-amino-acid chain: Protein-export protein SecB (168 aa).

This sequence belongs to the SecB family. As to quaternary structure, homotetramer, a dimer of dimers. One homotetramer interacts with 1 SecA dimer.

It is found in the cytoplasm. Functionally, one of the proteins required for the normal export of preproteins out of the cell cytoplasm. It is a molecular chaperone that binds to a subset of precursor proteins, maintaining them in a translocation-competent state. It also specifically binds to its receptor SecA. This chain is Protein-export protein SecB, found in Haemophilus influenzae (strain PittGG).